A 148-amino-acid chain; its full sequence is Small ribosomal subunit protein eS19G (148 aa).

The protein belongs to the eukaryotic ribosomal protein eS19 family.

In terms of biological role, elimination of the ALEP-1 gene from all somatic cells in its fully activate state may represent an alternative way to gene regulation. This Ascaris suum (Pig roundworm) protein is Small ribosomal subunit protein eS19G (RPS19G).